The sequence spans 481 residues: Guanine nucleotide exchange factor C9orf72 (481 aa).

Positions 23–194 (SPLLAATFAY…ELLSSMKSHS (172 aa)) constitute a uDENN C9ORF72-type domain. Positions 200 to 343 (DIADTVLNDD…SELTAFWRAT (144 aa)) constitute a cDENN C9ORF72-type domain. In terms of domain architecture, dDENN C9ORF72-type spans 370 to 464 (VLHRDTLVKA…IKPGLHSFIF (95 aa)). The required for the homodimerization of the C9orf72-SMCR8 complex stretch occupies residues 461 to 481 (SFIFGRPFYTSVQERDVLMTF).

In terms of assembly, component of the C9orf72-SMCR8 complex, at least composed of C9orf72, SMCR8 and WDR41. The complex is formed of two protomers, each individually consisting of one molecule each of C9orf72, SMCR8 and WDR41. The protomers homodimerize via an interaction between C9orf72 (via C-terminus) and SMCR8 (via N-terminus). Within each protomer SMCR8 (via DENN domain) acts as a bridging protein between WDR41 (via C-terminus and N-terminus) and C9orf72 (via C-terminus). The C9orf72-SMCR8 complex associates with the ULK1/ATG1 kinase complex. Interacts with ULK1/ATG1 kinase complex members ULK1, ATG13 and RB1CC1. Interacts with SMCR8; the interaction is direct. Interacts with HNRNPA1, HNRNPA2B1 and UBQLN2. Interacts with small Rab GTPase RAB1A; the interaction mediates recruitment of RAB1A to the ULK1/ATG1 kinase complex. Also interacts with small Rab GTPase RAB7A. Interacts with cofilin. Interacts with GTP-binding proteins ARF1 and ARF6. Interacts with the DLG4/PSD-95. Interacts with CARM1 (via PH domain-like fold). Interacts with RAB39A and RAB39B (in GDP-bound forms); functions as GEF for RAB39A and RAB39B. In terms of tissue distribution, both isoforms are widely expressed, including kidney, lung, liver, heart, testis and several brain regions, such as cerebellum. Also expressed in the frontal cortex and in lymphoblasts (at protein level).

Its subcellular location is the cytoplasm. The protein localises to the nucleus. It is found in the P-body. It localises to the stress granule. The protein resides in the endosome. Its subcellular location is the lysosome. The protein localises to the cytoplasmic vesicle. It is found in the autophagosome. It localises to the autolysosome. The protein resides in the secreted. Its subcellular location is the cell projection. The protein localises to the axon. It is found in the growth cone. It localises to the perikaryon. The protein resides in the dendrite. Its subcellular location is the presynapse. The protein localises to the postsynapse. It is found in the nucleus membrane. Acts as a guanine-nucleotide releasing factor (GEF) for Rab GTPases by promoting the conversion of inactive RAB-GDP to the active form RAB-GTP. Acts as a GEF for RAB39A which enables HOPS-mediated autophagosome-lysosome membrane tethering and fusion in mammalian autophagy. Component of the C9orf72-SMCR8 complex where both subunits display GEF activity and that regulates autophagy. As part of the C9orf72-SMCR8-WDR41 (CSW) complex, functions as GEF for RAB8A and RAB39B, thereby promoting autophagosome maturation. As part of the C9orf72-SMCR8 complex, also functions as GTPase activating protein (GAP) for RAB8A and RAB11A in vitro. The C9orf72-SMCR8 complex also acts as a regulator of autophagy initiation by interacting with the ULK1/ATG1 kinase complex and modulating its protein kinase activity. Promotes initiation of autophagy by regulating the RAB1A-dependent trafficking of the ULK1/ATG1 kinase complex to the phagophore which leads to autophagosome formation. Acts as a regulator of mTORC1 signaling by promoting phosphorylation of mTORC1 substrates. Plays a role in endosomal trafficking. May be involved in regulating the maturation of phagosomes to lysosomes. Promotes the lysosomal localization and lysosome-mediated degradation of CARM1 which leads to inhibition of starvation-induced lipid metabolism. Regulates actin dynamics in motor neurons by inhibiting the GTP-binding activity of ARF6, leading to ARF6 inactivation. This reduces the activity of the LIMK1 and LIMK2 kinases which are responsible for phosphorylation and inactivation of cofilin, leading to CFL1/cofilin activation. Positively regulates axon extension and axon growth cone size in spinal motor neurons. Required for SMCR8 protein expression and localization at pre- and post-synaptic compartments in the forebrain, also regulates protein abundance of RAB3A and GRIA1/GLUR1 in post-synaptic compartments in the forebrain and hippocampus. Plays a role within the hematopoietic system in restricting inflammation and the development of autoimmunity. In terms of biological role, regulates stress granule assembly in response to cellular stress. Functionally, does not play a role in regulation of stress granule assembly in response to cellular stress. This chain is Guanine nucleotide exchange factor C9orf72, found in Homo sapiens (Human).